The sequence spans 198 residues: Holliday junction branch migration complex subunit RuvA (198 aa).

The tract at residues 1-63 (MIALLTGQIA…EDAIQLYGFR (63 aa)) is domain I. A domain II region spans residues 64–142 (TSLEKSFFQL…KLDLSSVVVP (79 aa)). The tract at residues 143 to 153 (EPRQMPEDDLL) is flexible linker. Positions 153–198 (LEDVVSALLNLGYKEPQVRKVLAGLNPGSDASLEGVLKQALKSLMR) are domain III.

This sequence belongs to the RuvA family. Homotetramer. Forms an RuvA(8)-RuvB(12)-Holliday junction (HJ) complex. HJ DNA is sandwiched between 2 RuvA tetramers; dsDNA enters through RuvA and exits via RuvB. An RuvB hexamer assembles on each DNA strand where it exits the tetramer. Each RuvB hexamer is contacted by two RuvA subunits (via domain III) on 2 adjacent RuvB subunits; this complex drives branch migration. In the full resolvosome a probable DNA-RuvA(4)-RuvB(12)-RuvC(2) complex forms which resolves the HJ.

It is found in the cytoplasm. Functionally, the RuvA-RuvB-RuvC complex processes Holliday junction (HJ) DNA during genetic recombination and DNA repair, while the RuvA-RuvB complex plays an important role in the rescue of blocked DNA replication forks via replication fork reversal (RFR). RuvA specifically binds to HJ cruciform DNA, conferring on it an open structure. The RuvB hexamer acts as an ATP-dependent pump, pulling dsDNA into and through the RuvAB complex. HJ branch migration allows RuvC to scan DNA until it finds its consensus sequence, where it cleaves and resolves the cruciform DNA. The polypeptide is Holliday junction branch migration complex subunit RuvA (Pelobacter propionicus (strain DSM 2379 / NBRC 103807 / OttBd1)).